The primary structure comprises 284 residues: Bifunctional protein FolD (284 aa).

NADP(+) is bound by residues 166-168 (GRS) and serine 191.

This sequence belongs to the tetrahydrofolate dehydrogenase/cyclohydrolase family. In terms of assembly, homodimer.

It catalyses the reaction (6R)-5,10-methylene-5,6,7,8-tetrahydrofolate + NADP(+) = (6R)-5,10-methenyltetrahydrofolate + NADPH. The enzyme catalyses (6R)-5,10-methenyltetrahydrofolate + H2O = (6R)-10-formyltetrahydrofolate + H(+). Its pathway is one-carbon metabolism; tetrahydrofolate interconversion. Functionally, catalyzes the oxidation of 5,10-methylenetetrahydrofolate to 5,10-methenyltetrahydrofolate and then the hydrolysis of 5,10-methenyltetrahydrofolate to 10-formyltetrahydrofolate. This chain is Bifunctional protein FolD, found in Leptospira interrogans serogroup Icterohaemorrhagiae serovar copenhageni (strain Fiocruz L1-130).